A 203-amino-acid polypeptide reads, in one-letter code: Urease accessory protein UreG (203 aa).

14–21 (GPVGSGKT) is a GTP binding site.

The protein belongs to the SIMIBI class G3E GTPase family. UreG subfamily. Homodimer. UreD, UreF and UreG form a complex that acts as a GTP-hydrolysis-dependent molecular chaperone, activating the urease apoprotein by helping to assemble the nickel containing metallocenter of UreC. The UreE protein probably delivers the nickel.

The protein resides in the cytoplasm. Facilitates the functional incorporation of the urease nickel metallocenter. This process requires GTP hydrolysis, probably effectuated by UreG. This is Urease accessory protein UreG from Rhizobium etli (strain ATCC 51251 / DSM 11541 / JCM 21823 / NBRC 15573 / CFN 42).